A 1345-amino-acid polypeptide reads, in one-letter code: DNA-directed RNA polymerase subunit beta (1345 aa).

Belongs to the RNA polymerase beta chain family. In terms of assembly, the RNAP catalytic core consists of 2 alpha, 1 beta, 1 beta' and 1 omega subunit. When a sigma factor is associated with the core the holoenzyme is formed, which can initiate transcription.

It carries out the reaction RNA(n) + a ribonucleoside 5'-triphosphate = RNA(n+1) + diphosphate. Its function is as follows. DNA-dependent RNA polymerase catalyzes the transcription of DNA into RNA using the four ribonucleoside triphosphates as substrates. This chain is DNA-directed RNA polymerase subunit beta, found in Shewanella sp. (strain MR-4).